The sequence spans 1748 residues: Anaphase-promoting complex subunit 1 (1748 aa).

2 disordered regions span residues 1-24 (MTSKPSTRNDYLPRETHNGEYTGD) and 1435-1479 (VSGV…DPTA). Positions 1435 to 1450 (VSGVTQVTSNTNTPGN) are enriched in polar residues. Positions 1451-1468 (SDRERVDETAASLDDERS) are enriched in basic and acidic residues. Ser1462 carries the phosphoserine modification.

It belongs to the APC1 family. As to quaternary structure, the APC/C is composed of at least 13 subunits that stay tightly associated throughout the cell cycle: APC1, APC2, APC4, APC5, APC9, APC11, CDC16, CDC23, CDC26, CDC27, DOC1, MND2 and SWM1. APC1 interacts directly with MND2.

The protein localises to the nucleus. It localises to the cytoplasm. It is found in the cytoskeleton. The protein resides in the spindle pole. It participates in protein modification; protein ubiquitination. Functionally, component of the anaphase promoting complex/cyclosome (APC/C), a cell cycle-regulated E3 ubiquitin-protein ligase complex that controls progression through mitosis and the G1 phase of the cell cycle. The APC/C is thought to confer substrate specificity and, in the presence of ubiquitin-conjugating E2 enzymes, it catalyzes the formation of protein-ubiquitin conjugates that are subsequently degraded by the 26S proteasome. In early mitosis, the APC/C is activated by CDC20 and targets securin PDS1, the B-type cyclin CLB5, and other anaphase inhibitory proteins for proteolysis, thereby triggering the separation of sister chromatids at the metaphase-to-anaphase transition. In late mitosis and in G1, degradation of CLB5 allows activation of the APC/C by CDH1, which is needed to destroy CDC20 and the B-type cyclin CLB2 to allow exit from mitosis and creating the low CDK state necessary for cytokinesis and for reforming prereplicative complexes in G1 prior to another round of replication. This is Anaphase-promoting complex subunit 1 (APC1) from Saccharomyces cerevisiae (strain ATCC 204508 / S288c) (Baker's yeast).